A 166-amino-acid chain; its full sequence is Cytochrome c-550 2 (166 aa).

Positions 1 to 32 are cleaved as a signal peptide; sequence MFSRQFGRLATLALALAVAGCAGGEQSTTAEA. Heme c-binding residues include Cys71, Cys74, and His75.

Belongs to the cytochrome c family. PsbV subfamily. Heme c serves as cofactor.

The protein resides in the cell inner membrane. In terms of biological role, probable low-potential cytochrome c, might function in photosystem II (PSII). The sequence is that of Cytochrome c-550 2 (psbV2) from Gloeobacter violaceus (strain ATCC 29082 / PCC 7421).